A 116-amino-acid chain; its full sequence is Large ribosomal subunit protein bL19 (116 aa).

This sequence belongs to the bacterial ribosomal protein bL19 family.

In terms of biological role, this protein is located at the 30S-50S ribosomal subunit interface and may play a role in the structure and function of the aminoacyl-tRNA binding site. The sequence is that of Large ribosomal subunit protein bL19 from Nocardioides sp. (strain ATCC BAA-499 / JS614).